Consider the following 438-residue polypeptide: Tol-Pal system protein TolB (438 aa).

Positions 1 to 21 are cleaved as a signal peptide; sequence MVKRSLLVLALLICLPATLFA.

This sequence belongs to the TolB family. The Tol-Pal system is composed of five core proteins: the inner membrane proteins TolA, TolQ and TolR, the periplasmic protein TolB and the outer membrane protein Pal. They form a network linking the inner and outer membranes and the peptidoglycan layer.

It is found in the periplasm. Its function is as follows. Part of the Tol-Pal system, which plays a role in outer membrane invagination during cell division and is important for maintaining outer membrane integrity. The protein is Tol-Pal system protein TolB of Desulfosudis oleivorans (strain DSM 6200 / JCM 39069 / Hxd3) (Desulfococcus oleovorans).